Consider the following 270-residue polypeptide: Multi-heme protein MamP (270 aa).

The Cytoplasmic segment spans residues 1-6 (MNSKLV). Over 7–20 (LLVVGVVFALVLVI) the chain traverses the membrane. Topologically, residues 21 to 270 (GRQGGVVAPQ…GPCEACHVIN (250 aa)) are lumenal. The tract at residues 84–201 (NLKVFEGHWQ…GGLGFAQLEG (118 aa)) is PDZ. Residues 205 to 225 (ILPGDPRPHGYRGACTDCHPV) carry the MCR (magnetochrome) 1 motif. Heme is bound by residues Cys-219, Cys-222, His-223, Cys-263, Cys-266, and His-267. Residues 245–269 (ITRDAVTRGVSPHEVRGPCEACHVI) carry the MCR 2 motif.

This sequence belongs to the magnetosome MamP family. In terms of assembly, homodimer. Heme serves as cofactor. Subject to proteolytic cleavage which requires both MamE and MamO.

It is found in the cell inner membrane. Its function is as follows. Involved in redox-control of magnetite formation. Oxidizes Fe(2+) at alkaline pH; successively forms ferrihydrite (Fe(3+)(2)O(3) 0.5 H(2)O) then magnetite (Fe(3)O(4)) from an Fe(2+) solution. The chain is Multi-heme protein MamP from Magnetospirillum gryphiswaldense (strain DSM 6361 / JCM 21280 / NBRC 15271 / MSR-1).